A 229-amino-acid chain; its full sequence is NAD(P)H-hydrate epimerase (229 aa).

The region spanning 10 to 217 is the YjeF N-terminal domain; it reads AINVDQELFN…ALQRKYDLNL (208 aa). 60 to 64 lines the (6S)-NADPHX pocket; the sequence is NNGGD. The K(+) site is built by Asn-61 and Asp-125. Residues 129–135 and Asp-158 contribute to the (6S)-NADPHX site; that span reads GFSFKPP. Residue Ser-161 participates in K(+) binding.

The protein belongs to the NnrE/AIBP family. Requires K(+) as cofactor.

The enzyme catalyses (6R)-NADHX = (6S)-NADHX. It carries out the reaction (6R)-NADPHX = (6S)-NADPHX. In terms of biological role, catalyzes the epimerization of the S- and R-forms of NAD(P)HX, a damaged form of NAD(P)H that is a result of enzymatic or heat-dependent hydration. This is a prerequisite for the S-specific NAD(P)H-hydrate dehydratase to allow the repair of both epimers of NAD(P)HX. This Drosophila ananassae (Fruit fly) protein is NAD(P)H-hydrate epimerase.